The sequence spans 426 residues: Serine--tRNA ligase (426 aa).

Residue 233–235 (TAE) coordinates L-serine. 264–266 (RRE) contributes to the ATP binding site. Glu-287 contributes to the L-serine binding site. 351 to 354 (EISS) is an ATP binding site. Residue Ser-386 coordinates L-serine.

It belongs to the class-II aminoacyl-tRNA synthetase family. Type-1 seryl-tRNA synthetase subfamily. As to quaternary structure, homodimer. The tRNA molecule binds across the dimer.

It localises to the cytoplasm. The enzyme catalyses tRNA(Ser) + L-serine + ATP = L-seryl-tRNA(Ser) + AMP + diphosphate + H(+). The catalysed reaction is tRNA(Sec) + L-serine + ATP = L-seryl-tRNA(Sec) + AMP + diphosphate + H(+). Its pathway is aminoacyl-tRNA biosynthesis; selenocysteinyl-tRNA(Sec) biosynthesis; L-seryl-tRNA(Sec) from L-serine and tRNA(Sec): step 1/1. In terms of biological role, catalyzes the attachment of serine to tRNA(Ser). Is also able to aminoacylate tRNA(Sec) with serine, to form the misacylated tRNA L-seryl-tRNA(Sec), which will be further converted into selenocysteinyl-tRNA(Sec). This is Serine--tRNA ligase from Thermosipho africanus (strain TCF52B).